Consider the following 385-residue polypeptide: Mannitol-1-phosphate 5-dehydrogenase (385 aa).

An NAD(+)-binding site is contributed by 3 to 14 (DVHFGAGNIGRG).

It belongs to the mannitol dehydrogenase family.

It catalyses the reaction D-mannitol 1-phosphate + NAD(+) = beta-D-fructose 6-phosphate + NADH + H(+). This Lactiplantibacillus plantarum (strain ATCC BAA-793 / NCIMB 8826 / WCFS1) (Lactobacillus plantarum) protein is Mannitol-1-phosphate 5-dehydrogenase.